Here is a 312-residue protein sequence, read N- to C-terminus: Glyoxylate/hydroxypyruvate reductase A (312 aa).

The active site involves R227. The active-site Proton donor is the H275.

Belongs to the D-isomer specific 2-hydroxyacid dehydrogenase family. GhrA subfamily.

It localises to the cytoplasm. It catalyses the reaction glycolate + NADP(+) = glyoxylate + NADPH + H(+). The catalysed reaction is (R)-glycerate + NAD(+) = 3-hydroxypyruvate + NADH + H(+). The enzyme catalyses (R)-glycerate + NADP(+) = 3-hydroxypyruvate + NADPH + H(+). Functionally, catalyzes the NADPH-dependent reduction of glyoxylate and hydroxypyruvate into glycolate and glycerate, respectively. This Salmonella agona (strain SL483) protein is Glyoxylate/hydroxypyruvate reductase A.